Here is a 325-residue protein sequence, read N- to C-terminus: MATH domain and coiled-coil domain-containing protein At3g58340 (325 aa).

Residues 6 to 131 (DKKFCWEIKN…NGQVMIVAEV (126 aa)) enclose the MATH domain. Positions 266-315 (KVDWLEKKLDHVKEKKEKEQSGLIILQGIEQQLHELMHKCEKKKSEVLSV) form a coiled coil.

This is MATH domain and coiled-coil domain-containing protein At3g58340 from Arabidopsis thaliana (Mouse-ear cress).